The following is a 522-amino-acid chain: Serine/threonine-protein kinase BSK1-2 (522 aa).

A disordered region spans residues 1–54; the sequence is MGCCGSSLRVGSHAPEKPPRRARPPPPPPQPHHPRRPSFTLNAHQAAASSSAAS. Gly2 carries N-myristoyl glycine lipidation. Positions 79-338 constitute a Protein kinase domain; sequence ANIVSESGEK…KLVSILQPLQ (260 aa). ATP is bound by residues 85 to 93 and Lys111; that span reads SGEKAPNLV. Catalysis depends on Asp205, which acts as the Proton acceptor.

It belongs to the protein kinase superfamily. Ser/Thr protein kinase family.

Its subcellular location is the cell membrane. The enzyme catalyses L-seryl-[protein] + ATP = O-phospho-L-seryl-[protein] + ADP + H(+). It catalyses the reaction L-threonyl-[protein] + ATP = O-phospho-L-threonyl-[protein] + ADP + H(+). Its function is as follows. Probable serine/threonine kinase that functions as a positive regulator of plant immunity. May be involved in the regulation of pattern-triggered immunity (PTI). Does not seem to be involved in responses to brassinosteroid (BR) signaling. The protein is Serine/threonine-protein kinase BSK1-2 of Oryza sativa subsp. japonica (Rice).